Reading from the N-terminus, the 287-residue chain is Spermidine/putrescine transport system permease protein PotB (287 aa).

Residues 1–10 lie on the Cytoplasmic side of the membrane; the sequence is MKNTSKFQNV. A helical transmembrane segment spans residues 11-31; sequence VIVTIVGWLVLFVFLPNLMII. Topologically, residues 32-70 are periplasmic; sequence GTSFLTRDDASFVKMVFTLDNYARLLDPLYFEVLLHSLN. Residues 65-271 enclose the ABC transmembrane type-1 domain; it reads LLHSLNMALI…IVMGLMLLIY (207 aa). The helical transmembrane segment at 71-91 threads the bilayer; that stretch reads MALIATLSCLVLGYPFAWFLA. Residues 92-99 are Cytoplasmic-facing; it reads KLPEKIRP. Residues 100–120 form a helical membrane-spanning segment; sequence LLLFLLIVPFWTNSLIRIYGL. Residues 121-145 lie on the Periplasmic side of the membrane; it reads KIFLSTKGYLNEFLLWLGVIDTPIR. Residues 146-166 form a helical membrane-spanning segment; sequence IMFTPSAVIIGLVYILLPFMV. Residues 167–197 are Cytoplasmic-facing; it reads MPLYSSIEKLDKPLLEAARDLGASKMQTFIR. The chain crosses the membrane as a helical span at residues 198–218; the sequence is IIIPLTMPGIVAGCLLVMLPA. At 219–251 the chain is on the periplasmic side; sequence MGLFYVSDLMGGAKNLLIGNVIKVQFLNIRDWP. The helical transmembrane segment at 252-272 threads the bilayer; sequence FGAATSITLTIVMGLMLLIYW. The Cytoplasmic segment spans residues 273 to 287; that stretch reads RASRLLNKKVSDISD.

The protein belongs to the binding-protein-dependent transport system permease family. CysTW subfamily.

It localises to the cell inner membrane. Functionally, required for the activity of the bacterial periplasmic transport system of putrescine and spermidine. In Salmonella typhi, this protein is Spermidine/putrescine transport system permease protein PotB (potB).